The primary structure comprises 152 residues: Ribosome maturation factor RimP (152 aa).

This sequence belongs to the RimP family.

The protein localises to the cytoplasm. Its function is as follows. Required for maturation of 30S ribosomal subunits. The protein is Ribosome maturation factor RimP of Burkholderia ambifaria (strain MC40-6).